The sequence spans 153 residues: 6,7-dimethyl-8-ribityllumazine synthase (153 aa).

5-amino-6-(D-ribitylamino)uracil contacts are provided by residues F22, 56–58 (AFE), and 80–82 (AVI). 85–86 (AT) is a (2S)-2-hydroxy-3-oxobutyl phosphate binding site. The Proton donor role is filled by H88. Position 113 (F113) interacts with 5-amino-6-(D-ribitylamino)uracil. R127 contributes to the (2S)-2-hydroxy-3-oxobutyl phosphate binding site.

The protein belongs to the DMRL synthase family.

It catalyses the reaction (2S)-2-hydroxy-3-oxobutyl phosphate + 5-amino-6-(D-ribitylamino)uracil = 6,7-dimethyl-8-(1-D-ribityl)lumazine + phosphate + 2 H2O + H(+). It functions in the pathway cofactor biosynthesis; riboflavin biosynthesis; riboflavin from 2-hydroxy-3-oxobutyl phosphate and 5-amino-6-(D-ribitylamino)uracil: step 1/2. Catalyzes the formation of 6,7-dimethyl-8-ribityllumazine by condensation of 5-amino-6-(D-ribitylamino)uracil with 3,4-dihydroxy-2-butanone 4-phosphate. This is the penultimate step in the biosynthesis of riboflavin. The sequence is that of 6,7-dimethyl-8-ribityllumazine synthase from Alkaliphilus metalliredigens (strain QYMF).